Here is a 973-residue protein sequence, read N- to C-terminus: Protein HypA (973 aa).

The sequence is that of Protein HypA (hypA) from Clostridium perfringens (strain 13 / Type A).